Consider the following 235-residue polypeptide: Sugar fermentation stimulation protein homolog (235 aa).

The protein belongs to the SfsA family.

This Bartonella henselae (strain ATCC 49882 / DSM 28221 / CCUG 30454 / Houston 1) (Rochalimaea henselae) protein is Sugar fermentation stimulation protein homolog.